A 150-amino-acid polypeptide reads, in one-letter code: Large ribosomal subunit protein uL15 (150 aa).

The tract at residues 1–57 (MTIKLESLQSNKGSRRKKMRKGRGIAAGQGASCGFGMRGQKSRSGRPTRPGFEGGQM) is disordered. Basic residues predominate over residues 13 to 23 (GSRRKKMRKGR). The span at 25–37 (IAAGQGASCGFGM) shows a compositional bias: gly residues.

This sequence belongs to the universal ribosomal protein uL15 family. Part of the 50S ribosomal subunit.

In terms of biological role, binds to the 23S rRNA. In Prochlorococcus marinus (strain NATL1A), this protein is Large ribosomal subunit protein uL15.